The following is a 140-amino-acid chain: Transmembrane protein 107 (140 aa).

2 helical membrane passes run 7–27 and 53–73; these read LVPS…TLFW and LVAA…GFLS. A glycan (N-linked (GlcNAc...) asparagine) is linked at Asn79. Transmembrane regions (helical) follow at residues 83-103 and 113-133; these read SLLS…FIFE and IFAF…IAVF.

As to quaternary structure, part of the tectonic-like complex (also named B9 complex). Interacts with TMEM237, TMEM231, MKS1 and TMEM216.

It is found in the membrane. It localises to the cell projection. The protein resides in the cilium. Its function is as follows. Plays a role in cilia formation and embryonic patterning. Requires for normal Sonic hedgehog (Shh) signaling in the neural tube and acts in combination with GLI2 and GLI3 to pattern ventral and intermediate neuronal cell types. During ciliogenesis regulates the ciliary transition zone localization of some MKS complex proteins. The polypeptide is Transmembrane protein 107 (Rattus norvegicus (Rat)).